We begin with the raw amino-acid sequence, 151 residues long: UPF0208 membrane protein YfbV (151 aa).

Helical transmembrane passes span 46–65 (YAIRFMPPIAVFTLCWQIAL) and 69–91 (LGPAVATALFALSLPMQGLWWLG).

It belongs to the UPF0208 family.

Its subcellular location is the cell inner membrane. This Shigella flexneri serotype 5b (strain 8401) protein is UPF0208 membrane protein YfbV.